We begin with the raw amino-acid sequence, 232 residues long: UPF0758 protein EF_2926 (232 aa).

One can recognise an MPN domain in the interval K107–F229. Zn(2+)-binding residues include H178, H180, and D191. The JAMM motif signature appears at H178–D191.

This sequence belongs to the UPF0758 family.

In Enterococcus faecalis (strain ATCC 700802 / V583), this protein is UPF0758 protein EF_2926.